We begin with the raw amino-acid sequence, 467 residues long: 3-isopropylmalate dehydratase large subunit (467 aa).

[4Fe-4S] cluster is bound by residues C347, C407, and C410.

This sequence belongs to the aconitase/IPM isomerase family. LeuC type 1 subfamily. Heterodimer of LeuC and LeuD. The cofactor is [4Fe-4S] cluster.

It carries out the reaction (2R,3S)-3-isopropylmalate = (2S)-2-isopropylmalate. It participates in amino-acid biosynthesis; L-leucine biosynthesis; L-leucine from 3-methyl-2-oxobutanoate: step 2/4. Its function is as follows. Catalyzes the isomerization between 2-isopropylmalate and 3-isopropylmalate, via the formation of 2-isopropylmaleate. This is 3-isopropylmalate dehydratase large subunit from Nostoc sp. (strain PCC 7120 / SAG 25.82 / UTEX 2576).